The sequence spans 123 residues: Defensin beta 118 (123 aa).

An N-terminal signal peptide occupies residues 1–19 (MKLLLLALPMLVLLPQVIP). Disulfide bonds link Cys-27/Cys-54, Cys-34/Cys-48, and Cys-38/Cys-55. Disordered regions lie at residues 59–79 (NEDH…STPG) and 102–123 (MVEE…HHSS). Residues 64–123 (QVPTTSPTPLSDSTPGSIDDILTVRFTTDYFEVSSKKDMVEESEAGWGTQTSLPDVHHSS) constitute a propeptide that is removed on maturation. The span at 66 to 79 (PTTSPTPLSDSTPG) shows a compositional bias: low complexity.

The protein belongs to the beta-defensin family. The three-dimensional structure formed by the three intramolecular disulfide bridges is indispensable for antimicrobial activity.

Its subcellular location is the secreted. Host defense peptide that exhibits antimicrobial activity against both Gram-negative bacteria, such as E.coli and S.typhimurium, and Gram-positive bacteria, such as S.aureus and B.subtilis. Inhibits cell adhesion of E.coli on intestinal epithelial enterocytes. Causes rapid permeabilization of both the outer and inner membrane of E.coli, leading to morphological alterations on the bacterial surface. Binds to bacterial lipopolysaccharides (LPS) with high affinity, and may thereby be involved in immunoregulation through LPS neutralization. May contribute to epididymal innate immunity and protect the sperm against attack by microorganisms. The protein is Defensin beta 118 (DEFB118) of Hylobates lar (Lar gibbon).